A 242-amino-acid chain; its full sequence is Glucosamine-6-phosphate deaminase (242 aa).

D67 acts as the Proton acceptor; for enolization step in catalysis. N137 (for ring-opening step) is an active-site residue. The active-site Proton acceptor; for ring-opening step is the H139. E144 functions as the For ring-opening step in the catalytic mechanism.

It belongs to the glucosamine/galactosamine-6-phosphate isomerase family. NagB subfamily.

The catalysed reaction is alpha-D-glucosamine 6-phosphate + H2O = beta-D-fructose 6-phosphate + NH4(+). It functions in the pathway amino-sugar metabolism; N-acetylneuraminate degradation; D-fructose 6-phosphate from N-acetylneuraminate: step 5/5. Its function is as follows. Catalyzes the reversible isomerization-deamination of glucosamine 6-phosphate (GlcN6P) to form fructose 6-phosphate (Fru6P) and ammonium ion. The sequence is that of Glucosamine-6-phosphate deaminase from Staphylococcus saprophyticus subsp. saprophyticus (strain ATCC 15305 / DSM 20229 / NCIMB 8711 / NCTC 7292 / S-41).